The following is a 622-amino-acid chain: Arginine--tRNA ligase (622 aa).

Residues 127-137 (ANPVHPLHVGH) carry the 'HIGH' region motif.

Belongs to the class-I aminoacyl-tRNA synthetase family.

It is found in the cytoplasm. The enzyme catalyses tRNA(Arg) + L-arginine + ATP = L-arginyl-tRNA(Arg) + AMP + diphosphate. The polypeptide is Arginine--tRNA ligase (Ignicoccus hospitalis (strain KIN4/I / DSM 18386 / JCM 14125)).